Consider the following 251-residue polypeptide: Mast cell protease 3 (251 aa).

Residues 1–17 (MVLFLLLVALLSPAGEA) form the signal peptide. A propeptide spans 18–19 (GK) (activation peptide). A Peptidase S1 domain is found at 20 to 243 (IIGGHEAKPH…FLSWIQRTMR (224 aa)). Cysteine 48 and cysteine 64 are oxidised to a cystine. Histidine 63 functions as the Charge relay system in the catalytic mechanism. A glycan (N-linked (GlcNAc...) asparagine) is linked at asparagine 70. The active-site Charge relay system is aspartate 107. 2 cysteine pairs are disulfide-bonded: cysteine 141-cysteine 207 and cysteine 172-cysteine 186. Serine 201 functions as the Charge relay system in the catalytic mechanism.

Belongs to the peptidase S1 family. Granzyme subfamily.

The protein resides in the secreted. It is found in the cytoplasmic granule. This is Mast cell protease 3 from Ovis aries (Sheep).